The primary structure comprises 363 residues: DNA primase small subunit PriS (363 aa).

Catalysis depends on residues aspartate 105, aspartate 107, and aspartate 265.

The protein belongs to the eukaryotic-type primase small subunit family. Heterodimer of a small subunit (PriS) and a large subunit (PriL). Mg(2+) serves as cofactor. Mn(2+) is required as a cofactor.

Functionally, catalytic subunit of DNA primase, an RNA polymerase that catalyzes the synthesis of short RNA molecules used as primers for DNA polymerase during DNA replication. The small subunit contains the primase catalytic core and has DNA synthesis activity on its own. Binding to the large subunit stabilizes and modulates the activity, increasing the rate of DNA synthesis while decreasing the length of the DNA fragments, and conferring RNA synthesis capability. The DNA polymerase activity may enable DNA primase to also catalyze primer extension after primer synthesis. May also play a role in DNA repair. In Methanococcus maripaludis (strain C7 / ATCC BAA-1331), this protein is DNA primase small subunit PriS.